We begin with the raw amino-acid sequence, 201 residues long: Transmembrane 4 L6 family member 18 (201 aa).

Over 1–9 (MGSRKCGGC) the chain is Cytoplasmic. A helical membrane pass occupies residues 10–30 (LSCLLIPLALWSIIVNILLYF). The Extracellular segment spans residues 31 to 49 (PNGQTSYASSNKLTNYVWY). Residues 50-70 (FEGICFSGIMMLIVTTVLLVL) traverse the membrane as a helical segment. Residues 71–93 (ENNNNYKCCQSENCSKKYVTLLS) are Cytoplasmic-facing. The helical transmembrane segment at 94–114 (IIFSSLGIAFSGYCLVISALG) threads the bilayer. Residues 115 to 157 (LVQGPYCRTLDGWEYAFEGTAGRFLTDSSIWIQCLEPAHVVEW) lie on the Extracellular side of the membrane. A helical transmembrane segment spans residues 158 to 178 (NIILFSILITLSGLQVIICLI). Residues 179-201 (RVVMQLSKILCGSYSVIFQPGII) lie on the Cytoplasmic side of the membrane.

It belongs to the L6 tetraspanin family.

Its subcellular location is the membrane. The protein is Transmembrane 4 L6 family member 18 (TM4SF18) of Homo sapiens (Human).